The following is a 1404-amino-acid chain: MRSHNDFESITIRLASPERIKEWSYGEVKKPETINYRTLKPEKDGLFCEKIFGTTKDWECYCGKFKSIRYKGVICDKCGVEVTHSKVRRERMGHIELAAPVSHIWYYRSVPSRMGLLLDMTVNQLKSVLYFEKYVIIDPADSGRSRGELIDEEEYHGYLDEYGDKFVAGIGADAIKELLARIDVDAEARMIRQKIQDKDKISDKRILKRLEVLEAFRDSGNRPEWMVLDIVPVIPPELRPMVQLEGGRFATSDLNDLYRRVINRNNRLKRLLALKAPEIIVRNEKRMLQEAVDALFDNSRRKRAVKGKGNRPLKSISDMLKGKQGRFRQNLLGKRVDYSGRSVIVVGPELKYHEMGLPKKMALELFKPFIMKRLVDLDLAPNIKSAKKKVEAEDKEVFDVLEYVVKEHPVMLNRAPTLHRLGIQAFLPVLVEGKAIKLHPLVCHAFNADFDGDQMAIHVPLTPKAQLETWMLMLSPHNILNPANGHPICGPTQDIVLGIYYLTSELPSEPGAPLKSFSNLDEVHYAIDRGVVEFRTKISVYHQGKILETTPGRLIFNTILPEGYAYVNRPLSDKETNRIIADVYDKYGPAKTVLMLDDIKKLGYRYATLFAPTISIEDIRVSPGKVGLVGDANKEVEKADSEYRKGIITNEERRKKVIEIWTKTNDLITESMFKELEKDKGGFNPVFIMAASGARGSKQQIRQLAGMRGLMAKPSGEIIELAIRSNFREGLSVLEFFISTHGARKGLADTALKTADAGYLTRRLVDISQDVIISEDDCGTEESISLGIVKEGENVIVSLNDRVFGRYTAEDVIDPVTDKVVYPRNTLITREVGQKVENLGYDKIRVRSPLTCESKQGVCIRCYGMDMARLIPAEIGEAVGTIAAQSIGQPGTQLTMRTFHIGGAASAKVQEKEHKVSYTGIVNNINGRLITNEKSQSVFSRRGSIVIQRLIQQYKTEELSNLRVENGQKVDKGELVATSPSGENITSAMPGAVHIENGIFRILGEEAVIPVKTGTVVNVKVNDITQPNQPLAEFDPYNEVGISEIDGTVQWMDLEIGKNVRRDEDLRTSNILLKVIEQRREKLNPRIAVISGGSREEYSVPVDAIISVQDGDKVKAGDILFKIPTVAEKTRDITGGLPRVDELFEARRPKDATTLAETDGKIEISGEIVKEKRVLYIHPDNPDQEKVKVTIPIGKQIRVRNGDFVKRGDQIDDGNLDPHDILRVKGVTALQVYLVQEVQEVYRLQGVHINDKHIEVVVRQMLRKVLITDSGDTSFVNQQQIDRLMFNEENKRVIAEGGSPAESVPILLGLTKASLNTESFFSAASFQETTKVLTDAAIKGKTDNLMGLKENVIIGHMIPAGTGTKKYKDISVFKSAYGDLDRPLEEEEEEEIPQSIADDSDGDE.

Residues Cys-60, Cys-62, Cys-75, and Cys-78 each coordinate Zn(2+). 3 residues coordinate Mg(2+): Asp-449, Asp-451, and Asp-453. Residues Cys-778, Cys-852, Cys-859, and Cys-862 each coordinate Zn(2+). The interval 1381–1404 (DRPLEEEEEEEIPQSIADDSDGDE) is disordered. Over residues 1384–1404 (LEEEEEEEIPQSIADDSDGDE) the composition is skewed to acidic residues.

It belongs to the RNA polymerase beta' chain family. The RNAP catalytic core consists of 2 alpha, 1 beta, 1 beta' and 1 omega subunit. When a sigma factor is associated with the core the holoenzyme is formed, which can initiate transcription. Requires Mg(2+) as cofactor. It depends on Zn(2+) as a cofactor.

The enzyme catalyses RNA(n) + a ribonucleoside 5'-triphosphate = RNA(n+1) + diphosphate. DNA-dependent RNA polymerase catalyzes the transcription of DNA into RNA using the four ribonucleoside triphosphates as substrates. The protein is DNA-directed RNA polymerase subunit beta' of Leptospira borgpetersenii serovar Hardjo-bovis (strain JB197).